A 365-amino-acid chain; its full sequence is WAT1-related protein At1g01070 (365 aa).

10 helical membrane passes run 14-34 (YSPV…NALV), 46-66 (VIGA…AYVL), 83-103 (FVSG…GLSY), 107-127 (TVSC…ALIF), 139-159 (AGML…FLTF), 189-209 (WLLG…WMLF), 221-241 (YSST…LSLY), 255-275 (FVIT…TVAT), 285-305 (VFAS…DFLI), and 310-330 (LYLG…MFLW). The EamA 1 domain occupies 27–157 (MGSVNALVKK…LICISGALFL (131 aa)). Positions 223–329 (STCLMSIFAA…VTITGLYMFL (107 aa)) constitute an EamA 2 domain. A compositionally biased stretch (polar residues) spans 340–356 (TALSSGMDNEAQYTTPN). The disordered stretch occupies residues 340–365 (TALSSGMDNEAQYTTPNKDNDSKSPV).

This sequence belongs to the drug/metabolite transporter (DMT) superfamily. Plant drug/metabolite exporter (P-DME) (TC 2.A.7.4) family.

It localises to the membrane. This chain is WAT1-related protein At1g01070, found in Arabidopsis thaliana (Mouse-ear cress).